Consider the following 232-residue polypeptide: Small ribosomal subunit protein uS3 (232 aa).

A KH type-2 domain is found at 39–107 (IRAFLKKKLY…EVNVNIKEER (69 aa)). The interval 211 to 232 (GVQPEKTEEEAPKKTRRARRGK) is disordered. Residues 213-223 (QPEKTEEEAPK) show a composition bias toward basic and acidic residues.

Belongs to the universal ribosomal protein uS3 family. Part of the 30S ribosomal subunit. Forms a tight complex with proteins S10 and S14.

Functionally, binds the lower part of the 30S subunit head. Binds mRNA in the 70S ribosome, positioning it for translation. The sequence is that of Small ribosomal subunit protein uS3 from Campylobacter concisus (strain 13826).